A 184-amino-acid chain; its full sequence is Autophagy-related protein 101 (184 aa).

It belongs to the ATG101 family. In terms of assembly, component of the atg1 kinase complex composed of at least atg1, atg13, atg17 and atg101. Interacts directly with atg13.

The protein localises to the cytoplasm. It is found in the nucleus. The protein resides in the preautophagosomal structure membrane. In terms of biological role, autophagy factor required for autophagosome formation. Component of the atg1 kinase complex in which it stabilizes atg13. Is also responsible for recruiting downstream factors to the autophagosome-formation site. Has a role in meiosis and sporulation. This chain is Autophagy-related protein 101, found in Schizosaccharomyces pombe (strain 972 / ATCC 24843) (Fission yeast).